The sequence spans 158 residues: NAD(P)H-quinone oxidoreductase subunit J, chloroplastic (158 aa).

It belongs to the complex I 30 kDa subunit family. NDH is composed of at least 16 different subunits, 5 of which are encoded in the nucleus.

It localises to the plastid. It is found in the chloroplast thylakoid membrane. The enzyme catalyses a plastoquinone + NADH + (n+1) H(+)(in) = a plastoquinol + NAD(+) + n H(+)(out). The catalysed reaction is a plastoquinone + NADPH + (n+1) H(+)(in) = a plastoquinol + NADP(+) + n H(+)(out). In terms of biological role, NDH shuttles electrons from NAD(P)H:plastoquinone, via FMN and iron-sulfur (Fe-S) centers, to quinones in the photosynthetic chain and possibly in a chloroplast respiratory chain. The immediate electron acceptor for the enzyme in this species is believed to be plastoquinone. Couples the redox reaction to proton translocation, and thus conserves the redox energy in a proton gradient. In Solanum tuberosum (Potato), this protein is NAD(P)H-quinone oxidoreductase subunit J, chloroplastic.